The chain runs to 283 residues: Phosphatidylglycerol--prolipoprotein diacylglyceryl transferase (283 aa).

Transmembrane regions (helical) follow at residues 20-40 (LGPV…FVAM), 51-71 (GGNP…GIIG), 97-117 (ITNG…AVYF), and 123-143 (GVAF…AQAI). Arg145 serves as a coordination point for a 1,2-diacyl-sn-glycero-3-phospho-(1'-sn-glycerol). The next 2 membrane-spanning stretches (helical) occupy residues 192-212 (VHPT…VLLW) and 255-275 (INVI…FALR).

It belongs to the Lgt family.

The protein resides in the cell membrane. The catalysed reaction is L-cysteinyl-[prolipoprotein] + a 1,2-diacyl-sn-glycero-3-phospho-(1'-sn-glycerol) = an S-1,2-diacyl-sn-glyceryl-L-cysteinyl-[prolipoprotein] + sn-glycerol 1-phosphate + H(+). The protein operates within protein modification; lipoprotein biosynthesis (diacylglyceryl transfer). Functionally, catalyzes the transfer of the diacylglyceryl group from phosphatidylglycerol to the sulfhydryl group of the N-terminal cysteine of a prolipoprotein, the first step in the formation of mature lipoproteins. The protein is Phosphatidylglycerol--prolipoprotein diacylglyceryl transferase of Corynebacterium diphtheriae (strain ATCC 700971 / NCTC 13129 / Biotype gravis).